The following is a 483-amino-acid chain: E3 ubiquitin-protein ligase TRIM50 (483 aa).

The RING-type zinc finger occupies 16 to 57 (CPICLEVFKEPLMLQCGHSYCKDCLDNLSQHLDSELCCPVCR). The B box-type zinc-finger motif lies at 84 to 125 (IEPTVCVHHRNPLSLFCEKDQEFICGLCGLLGSHQHHRVTPV). Zn(2+)-binding residues include C89, H92, C111, and H117. Coiled-coil stretches lie at residues 127–169 (TVYS…NESD) and 203–236 (GLVA…GNES). The B30.2/SPRY domain maps to 275–474 (DIKLTVWKRL…LPMVLPPPSG (200 aa)). Position 372 is an N6-acetyllysine (K372).

Belongs to the TRIM/RBCC family. Can form dimers and trimers. Interacts with several E2 ubiquitin-conjugating enzymes, including UBE2L6, UBE2E1, UBE2E3. No interaction with UBE2H. Interacts with BECN1. Interacts with SQSTM1. Interacts with NLRP3. Auto-ubiquitinated. Post-translationally, acetylated by EP300 and KAT2B. HDAC6 drives TRIM50 deacetylation. Acetylation antagonizes with TRIM50 ubiquitination. In terms of tissue distribution, expressed in the stomach.

Its subcellular location is the cytoplasm. The enzyme catalyses S-ubiquitinyl-[E2 ubiquitin-conjugating enzyme]-L-cysteine + [acceptor protein]-L-lysine = [E2 ubiquitin-conjugating enzyme]-L-cysteine + N(6)-ubiquitinyl-[acceptor protein]-L-lysine.. Its function is as follows. E3 ubiquitin-protein ligase that ubiquitinates Beclin-1/BECN1 in a 'Lys-63'-dependent manner enhancing its binding to ULK1. In turn, promotes starvation-induced autophagy activation. Also interacts with p62/SQSTM1 protein and thereby induces the formation and the autophagy clearance of aggresome-associated polyubiquitinated proteins through HDAC6 interaction. Also promotes NLRP3 inflammasome activation by directly inducing NLRP3 oligomerization independent of its E3 ligase function. This Mus musculus (Mouse) protein is E3 ubiquitin-protein ligase TRIM50 (Trim50).